Here is a 316-residue protein sequence, read N- to C-terminus: ATP synthase gamma chain (316 aa).

Belongs to the ATPase gamma chain family. F-type ATPases have 2 components, CF(1) - the catalytic core - and CF(0) - the membrane proton channel. CF(1) has five subunits: alpha(3), beta(3), gamma(1), delta(1), epsilon(1). CF(0) has three main subunits: a, b and c.

The protein resides in the cellular thylakoid membrane. In terms of biological role, produces ATP from ADP in the presence of a proton gradient across the membrane. The gamma chain is believed to be important in regulating ATPase activity and the flow of protons through the CF(0) complex. This chain is ATP synthase gamma chain, found in Prochlorococcus marinus (strain NATL2A).